Reading from the N-terminus, the 144-residue chain is Large ribosomal subunit protein uL15 (144 aa).

The tract at residues 1–54 is disordered; it reads MRLNTLSPAEGSKKAGKRLGRGIGSGLGKTGGRGHKGQKSRSGGGVRRGFEGGQ. The segment covering 21–31 has biased composition (gly residues); it reads RGIGSGLGKTG.

The protein belongs to the universal ribosomal protein uL15 family. In terms of assembly, part of the 50S ribosomal subunit.

Functionally, binds to the 23S rRNA. This chain is Large ribosomal subunit protein uL15, found in Klebsiella pneumoniae (strain 342).